The chain runs to 142 residues: Hemoglobin subunit alpha-B (142 aa).

Positions Pro-2 to Arg-142 constitute a Globin domain. O2 is bound at residue Gln-59. A heme b-binding site is contributed by His-88.

Belongs to the globin family. Heterotetramer of either two alpha-B chains or two alpha-C chains and two beta chains. The two major hemoglobins, B and C, associate upon deoxygenation to form a trimer of tetramers, BC2, that has a much lower affinity for oxygen than either component alone. Red blood cells.

Its function is as follows. The alpha-B chain is a component of adult hemoglobin B. The polypeptide is Hemoglobin subunit alpha-B (Aquarana catesbeiana (American bullfrog)).